We begin with the raw amino-acid sequence, 64 residues long: Temporin-ALf (64 aa).

A signal peptide spans 1 to 22 (MFTLKKSLLLLFFLGTINLSLC). The propeptide occupies 23 to 46 (EQERNAEEERRDEPDERNAEVEKR). Position 62 is a leucine amide (Leu-62).

Expressed by the skin glands.

The protein resides in the secreted. Functionally, antimicrobial peptide with activity against Gram-positive and Gram-negative bacteria and against fungi. Has been tested against S.aureus (MIC=2.5 ug/mL), B.pumilus (MIC=5.0 ug/mL), B.cereus (MIC=30.0 ug/mL), E.coli (MIC=2.5 ug/mL), B.dysenteriae (MIC=5.0 ug/mL), A.cacoaceticus (MIC=30.0 ug/mL), P.aeruginosa (MIC=5.0 ug/mL) and C.albicans (MIC=2.5 ug/mL). Also shows a weak hemolytic activity. The protein is Temporin-ALf of Amolops loloensis (Lolokou Sucker Frog).